A 536-amino-acid chain; its full sequence is Caspase A (536 aa).

The propeptide at 1–273 (MVLKTIEDNC…DSQSRMPRTD (273 aa)) is removed in mature form by autoprocessing. Residues His-364 and Cys-406 contribute to the active site.

This sequence belongs to the peptidase C14A family. As to quaternary structure, heterodimer formed by the tight association of the large subunit p16 and the small subunit p14. Post-translationally, autocatalytic cleavage removes the propeptide and generates the two active subunits p16 and p14 in vitro. Cannot be cleaved by ced-3 in vitro. Isoform a: Expression is restricted to the late germline pachytene stage of meiosis I in both L4 larvae and adult hermaphrodite gonads. Isoform b: Expression is restricted to the late germline pachytene stage of meiosis I in both L4 larvae and adult hermaphrodite gonads.

It carries out the reaction Strict requirement for an Asp residue at position P1 and has a preferred cleavage sequence of Tyr-Val-Ala-Asp-|-.. With respect to regulation, inhibited by cysteine protease inhibitor iodoacetic acid (CH3COOI) but not by N-[N-(L-3-transcarboxirane-2-carbonyl)-leucyl]-agmatine (E-64) or benzyloxycarbonyl-DEVD-fluoro-methyl ketone (Z-DEVD-FMK). In terms of biological role, cysteine protease which, in vitro, cleaves itself and caspase ced-3 into their mature active forms. Also cleaves, in vitro, inactive caspase csp-2 isoform b. Required maternally to induce apoptosis in a subset of cells fated to die during embryogenesis, mostly independently of the ced-9, ced-4 and ced-3 canonical apoptosis pathway. Involved in the degeneration of dopaminergic CEP neurons in response to high Mn(2+) levels. Dispensable for regulating apoptosis during embryogenesis. This Caenorhabditis elegans protein is Caspase A.